A 381-amino-acid chain; its full sequence is 1-deoxy-D-xylulose 5-phosphate reductoisomerase (381 aa).

Positions 11, 12, 13, 14, 37, and 121 each coordinate NADPH. Lys-122 contacts 1-deoxy-D-xylulose 5-phosphate. NADPH is bound at residue Glu-123. Asp-147 provides a ligand contact to Mn(2+). 4 residues coordinate 1-deoxy-D-xylulose 5-phosphate: Ser-148, Glu-149, Ser-173, and His-196. Glu-149 contacts Mn(2+). Gly-202 contributes to the NADPH binding site. Positions 209, 214, 215, and 218 each coordinate 1-deoxy-D-xylulose 5-phosphate. Glu-218 provides a ligand contact to Mn(2+).

This sequence belongs to the DXR family. Requires Mg(2+) as cofactor. It depends on Mn(2+) as a cofactor.

It catalyses the reaction 2-C-methyl-D-erythritol 4-phosphate + NADP(+) = 1-deoxy-D-xylulose 5-phosphate + NADPH + H(+). Its pathway is isoprenoid biosynthesis; isopentenyl diphosphate biosynthesis via DXP pathway; isopentenyl diphosphate from 1-deoxy-D-xylulose 5-phosphate: step 1/6. In terms of biological role, catalyzes the NADPH-dependent rearrangement and reduction of 1-deoxy-D-xylulose-5-phosphate (DXP) to 2-C-methyl-D-erythritol 4-phosphate (MEP). This is 1-deoxy-D-xylulose 5-phosphate reductoisomerase from Ruminiclostridium cellulolyticum (strain ATCC 35319 / DSM 5812 / JCM 6584 / H10) (Clostridium cellulolyticum).